The sequence spans 760 residues: E4 SUMO-protein ligase PIAL2 (760 aa).

An interacting domain (IND), required for interaction with MOM1 and PIAL1 region spans residues 143-301 (IKSPGSTFSQ…GVIEASPDSD (159 aa)). The SP-RING-type zinc-finger motif lies at 298–379 (PDSDIIEGPS…MAKILKDVEH (82 aa)). Residues cysteine 329, histidine 331, cysteine 352, and cysteine 355 each contribute to the Zn(2+) site. Basic and acidic residues predominate over residues 440–450 (GDNKVEDRKPC). Disordered regions lie at residues 440 to 471 (GDNK…SNDD), 492 to 522 (LGNT…MSID), 631 to 657 (GVRG…SVSR), and 699 to 760 (SQQS…GPTS). 3 stretches are compositionally biased toward polar residues: residues 492–518 (LGNT…SQIP), 631–653 (GVRG…PTVQ), and 699–729 (SQQS…SPFT).

The protein belongs to the PIAL protein ligase family. As to quaternary structure, homodimer. Interacts with MOM1 and PIAL1 to form a high molecular mass complex which mediates transcriptional silencing at heterochromatin regions. As to expression, expressed in leaves, stems and flowers, and, at low levels, in siliques and old leaves.

Its subcellular location is the nucleus. The protein operates within protein modification; protein sumoylation. Functionally, together with MOM1 and PIAL1, regulates transcriptional gene silencing (TGS) independently of changes in DNA methylation. E4-type SUMO ligase that promotes SUMO chain formation in a SCE1-dependent manner and thus contributes to a pathway for proteolytic removal of sumoylation substrates. Involved in stress responses and sulfur metabolism. This Arabidopsis thaliana (Mouse-ear cress) protein is E4 SUMO-protein ligase PIAL2.